Reading from the N-terminus, the 863-residue chain is Leucine--tRNA ligase (863 aa).

The short motif at 42–52 (PYPSGRLHMGH) is the 'HIGH' region element. Positions 622 to 626 (KMSKS) match the 'KMSKS' region motif. Lys-625 lines the ATP pocket.

This sequence belongs to the class-I aminoacyl-tRNA synthetase family.

The protein resides in the cytoplasm. The enzyme catalyses tRNA(Leu) + L-leucine + ATP = L-leucyl-tRNA(Leu) + AMP + diphosphate. This chain is Leucine--tRNA ligase, found in Shewanella denitrificans (strain OS217 / ATCC BAA-1090 / DSM 15013).